The chain runs to 239 residues: Guanylate kinase (239 aa).

Positions 19-197 (GLLIVVTGAS…AVSELLAVQQ (179 aa)) constitute a Guanylate kinase-like domain. Residue 26-33 (GASGVGKG) participates in ATP binding.

It belongs to the guanylate kinase family.

It localises to the cytoplasm. It carries out the reaction GMP + ATP = GDP + ADP. Functionally, essential for recycling GMP and indirectly, cGMP. This Deinococcus radiodurans (strain ATCC 13939 / DSM 20539 / JCM 16871 / CCUG 27074 / LMG 4051 / NBRC 15346 / NCIMB 9279 / VKM B-1422 / R1) protein is Guanylate kinase (gmk).